The following is a 242-amino-acid chain: Uridylate kinase (242 aa).

K11–G14 is an ATP binding site. An involved in allosteric activation by GTP region spans residues G19–G24. A UMP-binding site is contributed by G53. ATP is bound by residues G54 and R58. Residues D73 and I134–T141 each bind UMP. N162, Y168, and D171 together coordinate ATP.

The protein belongs to the UMP kinase family. Homohexamer.

It is found in the cytoplasm. The enzyme catalyses UMP + ATP = UDP + ADP. It functions in the pathway pyrimidine metabolism; CTP biosynthesis via de novo pathway; UDP from UMP (UMPK route): step 1/1. Allosterically activated by GTP. Inhibited by UTP. In terms of biological role, catalyzes the reversible phosphorylation of UMP to UDP. This chain is Uridylate kinase, found in Streptococcus pyogenes serotype M1.